The sequence spans 392 residues: Formate-dependent phosphoribosylglycinamide formyltransferase (392 aa).

N(1)-(5-phospho-beta-D-ribosyl)glycinamide contacts are provided by residues 22–23 (EL) and Glu-82. ATP is bound by residues Arg-114, Lys-155, 160 to 165 (SSGHGQ), 195 to 198 (EGFI), and Glu-203. The 189-residue stretch at 119-307 (RLAAEELGLK…QFALHARAIL (189 aa)) folds into the ATP-grasp domain. Glu-266 and Glu-278 together coordinate Mg(2+). N(1)-(5-phospho-beta-D-ribosyl)glycinamide contacts are provided by residues Asp-285, Lys-355, and 362–363 (RR).

This sequence belongs to the PurK/PurT family. As to quaternary structure, homodimer.

Its subcellular location is the cell inner membrane. The catalysed reaction is N(1)-(5-phospho-beta-D-ribosyl)glycinamide + formate + ATP = N(2)-formyl-N(1)-(5-phospho-beta-D-ribosyl)glycinamide + ADP + phosphate + H(+). Its pathway is purine metabolism; IMP biosynthesis via de novo pathway; N(2)-formyl-N(1)-(5-phospho-D-ribosyl)glycinamide from N(1)-(5-phospho-D-ribosyl)glycinamide (formate route): step 1/1. Its function is as follows. Involved in the de novo purine biosynthesis. Catalyzes the transfer of formate to 5-phospho-ribosyl-glycinamide (GAR), producing 5-phospho-ribosyl-N-formylglycinamide (FGAR). Formate is provided by PurU via hydrolysis of 10-formyl-tetrahydrofolate. In Mannheimia haemolytica (Pasteurella haemolytica), this protein is Formate-dependent phosphoribosylglycinamide formyltransferase.